Here is a 339-residue protein sequence, read N- to C-terminus: Annexin A2 (339 aa).

N-acetylserine is present on S2. Positions 2–24 (STVHEILCKLSLEGDHSTPPSAY) are S100A10-binding site. The residue at position 24 (Y24) is a Phosphotyrosine; by SRC. The residue at position 26 (S26) is a Phosphoserine; by PKC. 2 Annexin repeats span residues 33–104 (FDAE…GLLK) and 105–176 (TPAQ…ALAK). N6-acetyllysine; alternate is present on K49. Residue K49 forms a Glycyl lysine isopeptide (Lys-Gly) (interchain with G-Cter in SUMO1); alternate linkage. Residue K49 forms a Glycyl lysine isopeptide (Lys-Gly) (interchain with G-Cter in SUMO2); alternate linkage. N6-acetyllysine is present on K152. S184 is modified (phosphoserine). Annexin repeat units lie at residues 189-261 (ELID…NLVQ) and 265-336 (NKPL…YLCG). Y199 is subject to Phosphotyrosine. K227 carries the N6-acetyllysine modification.

Belongs to the annexin family. Heterotetramer containing 2 light chains of S100A10/p11 and 2 heavy chains of ANXA2/p36. Interacts with ATP1B1. Interacts with DYSF. Interacts with COCH. Interacts (via repeat Annexin 1) with PCSK9 (via the C-terminal domain); the interaction inhibits the degradation of LDLR. Interacts with CEACAM1 (via the cytoplasmic domain); this interaction is regulated by phosphorylation of CEACAM1. Interacts with APPL2 and APPL1; targets APPL2 to endosomes and acting in parallel to RAB5A. Interacts with S100A4. May interact with UBAP2. Interacts with PLEKHG4B; this interaction is required for PLEKHG4B localization to cell-cell adhesions. Interacts with FAM13A. Interacts with salivary cystatin-L2 (via loop 2) from the tick Ixodes scapularis; the interaction results in reduced activation of mouse NLRC4 inflammasome formation upon Anaplasma phagocytophilum infection. In terms of processing, ISGylated.

The protein localises to the secreted. It localises to the extracellular space. It is found in the extracellular matrix. The protein resides in the basement membrane. Its subcellular location is the melanosome. The protein localises to the early endosome. Calcium-regulated membrane-binding protein whose affinity for calcium is greatly enhanced by anionic phospholipids. It binds two calcium ions with high affinity. May be involved in heat-stress response. Inhibits PCSK9-enhanced LDLR degradation, probably reduces PCSK9 protein levels via a translational mechanism but also competes with LDLR for binding with PCSK9. Binds to endosomes damaged by phagocytosis of particulate wear debris and participates in endosomal membrane stabilization, thereby limiting NLRP3 inflammasome activation. Required for endothelial cell surface plasmin generation and may support fibrinolytic surveillance and neoangiogenesis. In terms of biological role, (Microbial infection) Regulates the formation of the NLRC4 inflammasome triggered by Anaplasma phagocytophilum infection. Its function is as follows. (Microbial infection) Protects against Klebsiella pneumoniae infection. Attenuates bacteria-induced pulmonary inflammation and promotes intro-abdominal pathogen clearance. Promotes anti-inflammatory responses by facilitating TLR4 internalization and translocation into early endosomal membranes; this leads to activation of TRAM-dependent endosomal signaling and release of anti-inflammatory cytokines. Functionally, (Microbial infection) Promotes macrophage phagocytic efficiency towards Cryptococcus neoformans and ability to control fungal infection inside the cells. (Microbial infection) Contributes to protection against Pseudomonas aeruginosa infection by regulating autophagy via the AKT1-mTOR-ULK1/2 signaling pathway and activation of Rho GTPases via FAM13A-mediated mechanism. This chain is Annexin A2 (Anxa2), found in Mus musculus (Mouse).